Here is a 447-residue protein sequence, read N- to C-terminus: MAPPRCRREKLNSTVAEGGVQAADGQRCQRGLPLLGAVPQAAPYTRNNGMGECRRGHRQGHRAEVHDNRPADKVGQGRWLNSQTRRPCRKEVTSFQFFPFLIFHTGGAEMEPLEIMDEGEGPLVGWCDPDEFREWVRDNKSREMADKTMSAEEAVSNFIKDGMYVASGGFGHVRVSMNIIYEIIRQGVKGLTMAGKTSVHDLDVLMAAGCVEKVEAAYSFGHELRGLSPASRRKVEGGEVKVITEWSNAALQWRFKAAAMGLPFIPARILMGTDTFKKSSAKIIRDPYSGKPVTLIPACFPDVAIIHVHRADKYGNAQIDGILVEDYELARAAKRLIVTTEEIVPTDKIRESPWRTSIPYFLVDAVVEQPFASHPCNMPLLYYFDEEHIAEYLALTRTEEGAKEYFEKYVYGVNDFWEYLEVVGGSKRLEKLRRIEQLRERPVYPWR.

A disordered region spans residues 39–76 (PQAAPYTRNNGMGECRRGHRQGHRAEVHDNRPADKVGQ). Residues 61 to 72 (HRAEVHDNRPAD) are compositionally biased toward basic and acidic residues.

Belongs to the 3-oxoacid CoA-transferase subunit A family.

This is an uncharacterized protein from Archaeoglobus fulgidus (strain ATCC 49558 / DSM 4304 / JCM 9628 / NBRC 100126 / VC-16).